The primary structure comprises 562 residues: 63 kDa globulin-like protein (562 aa).

The signal sequence occupies residues 1–23 (MATRARATILLLLAAVLFAAAAA). Residues 63–88 (QQQQERRREHGGHDDDRRDRDRRGEG) are compositionally biased toward basic and acidic residues. A disordered region spans residues 63–103 (QQQQERRREHGGHDDDRRDRDRRGEGSSEEEDEGRERGSRR). Cupin type-1 domains lie at 106–264 (YVFG…EKLE) and 312–507 (FNIL…REVD). A glycan (N-linked (GlcNAc...) asparagine) is linked at asparagine 350. Disordered stretches follow at residues 383–430 (PHLS…QVGQ) and 516–550 (SAFL…GDEA). The segment covering 390 to 408 (RGGESEERRRERGKGKWRE) has biased composition (basic and acidic residues). Acidic residues predominate over residues 409–427 (EEEEEEEQQKGQEEEEEEQ).

It belongs to the 7S seed storage protein family.

It localises to the secreted. Its function is as follows. Seed storage protein. This chain is 63 kDa globulin-like protein, found in Oryza sativa subsp. japonica (Rice).